The primary structure comprises 216 residues: Octanoyltransferase (216 aa).

Residues 30–216 form the BPL/LPL catalytic domain; the sequence is GEAGEAVWLL…KRQFFEVFGA (187 aa). Substrate contacts are provided by residues 69 to 76, 149 to 151, and 162 to 164; these read RGGQYTYH, AIG, and GLS. The active-site Acyl-thioester intermediate is the Cys180.

The protein belongs to the LipB family.

Its subcellular location is the cytoplasm. It catalyses the reaction octanoyl-[ACP] + L-lysyl-[protein] = N(6)-octanoyl-L-lysyl-[protein] + holo-[ACP] + H(+). It participates in protein modification; protein lipoylation via endogenous pathway; protein N(6)-(lipoyl)lysine from octanoyl-[acyl-carrier-protein]: step 1/2. In terms of biological role, catalyzes the transfer of endogenously produced octanoic acid from octanoyl-acyl-carrier-protein onto the lipoyl domains of lipoate-dependent enzymes. Lipoyl-ACP can also act as a substrate although octanoyl-ACP is likely to be the physiological substrate. The protein is Octanoyltransferase of Jannaschia sp. (strain CCS1).